We begin with the raw amino-acid sequence, 928 residues long: Tyrosine-protein phosphatase 3 (928 aa).

T75 is modified (phosphothreonine). The region spanning 111–232 is the Rhodanese domain; the sequence is PDEKVLLLDV…FKILFPDHIN (122 aa). A disordered region spans residues 247 to 307; it reads KSPKTNLMNS…PRNVLSDSPM (61 aa). The residue at position 248 (S248) is a Phosphoserine. Composition is skewed to polar residues over residues 249-259 and 265-275; these read PKTNLMNSLHN and TATTPLSSPQM. Basic and acidic residues predominate over residues 280-289; that stretch reads KVPDDSRSDH. Positions 290–307 are enriched in low complexity; it reads SNFSSSPSPRNVLSDSPM. Phosphoserine is present on residues S297 and S368. Disordered regions lie at residues 467 to 487 and 672 to 713; these read LTSTSSSTIMPPKFPDVNKVQ and MRKN…NNNN. The Tyrosine-protein phosphatase domain occupies 502-878; sequence YKSMLSLESD…IFIYDCLLFY (377 aa). Residues 672 to 691 are compositionally biased toward polar residues; it reads MRKNTMGTQNSSLYSAGVQG. Residues 692-713 show a composition bias toward low complexity; that stretch reads NSSNYSTDNDNDNDNNNNNNNN. Catalysis depends on C804, which acts as the Phosphocysteine intermediate.

It belongs to the protein-tyrosine phosphatase family. Non-receptor class subfamily. As to quaternary structure, interacts with HOG1.

The protein localises to the cytoplasm. It catalyses the reaction O-phospho-L-tyrosyl-[protein] + H2O = L-tyrosyl-[protein] + phosphate. Major phosphatase responsible for tyrosine dephosphorylation of MAP kinases FUS3 and HOG1 to inactivate their activity; it also has important roles, along with MSG5, in the inactivation of FUS3 following pheromone stimulation. This Saccharomyces cerevisiae (strain ATCC 204508 / S288c) (Baker's yeast) protein is Tyrosine-protein phosphatase 3 (PTP3).